A 154-amino-acid chain; its full sequence is Cell cycle regulator of non-homologous end joining (154 aa).

The residue at position 1 (M1) is an N-acetylmethionine. Positions 1–21 match the KBM motif; that stretch reads METLKSENKKRVLPSWMTAPV. The interval 77–144 is disordered; the sequence is EEPTLVAPDK…RSPEEEEEDA (68 aa). Positions 95-105 are enriched in low complexity; sequence ASPHTSSPGSS. Positions 144–154 match the XLM motif; sequence ALKYVREIFFS.

In terms of assembly, interacts (via KBM motif) with XRCC5/Ku80 and XRCC6/Ku70 heterodimer. Interacts (via XLF motif) with TRIM28/KAP1, ATM, MRE11, NBN and RAD50. Interacts with splicing factor SF3B1. Interacts with ERCC6L2; this interaction is DNA independent.

It localises to the cytoplasm. Its subcellular location is the nucleus. It is found in the chromosome. Functionally, cell-cycle-specific regulator of classical non-homologous end joining (NHEJ) of DNA double-strand break (DSB) repair, which can act both as an activator or inhibitor of NHEJ, depending on the cell cycle phase. Acts as a regulator of DNA repair pathway choice by specifically inhibiting classical NHEJ during the S and G2 phases, thereby promoting error-free repair by homologous recombination during cell cycle phases when sister chromatids are present. Preferentially protects single-stranded overhangs at break sites by inhibiting classical NHEJ, thereby creating a local environment that favors homologous recombination. Acts via interaction with XRCC5/Ku80 and XRCC6/Ku70. In contrast, acts as an activator of NHEJ during G1 phase of the cell cycle: promotes classical NHEJ in G1 phase cells via multivalent interactions that increase the affinity of DNA damage response proteins for DSB-associated chromatin. Also involved in immunoglobulin V(D)J recombination. May act as a regulator of proteasome. In case of infection by a retrovirus, may regulate the proteasome during the uncoating phase of retrovirus. The sequence is that of Cell cycle regulator of non-homologous end joining from Cricetulus griseus (Chinese hamster).